We begin with the raw amino-acid sequence, 957 residues long: Glutamyl aminopeptidase (957 aa).

Topologically, residues 1 to 18 (MNFAEREGSKRYCIQTKH) are cytoplasmic. A helical; Signal-anchor for type II membrane protein membrane pass occupies residues 19 to 39 (VAILCAVVVGVGLIVGLAVGL). The Extracellular portion of the chain corresponds to 40-957 (TRSCDSSGDG…EWFFNLLESG (918 aa)). A disordered region spans residues 44 to 83 (DSSGDGGPGTAPAPSHLPSSTASPSGPPAQDQDICPASED). The N-linked (GlcNAc...) asparagine; atypical glycan is linked to Asn98. N-linked (GlcNAc...) asparagine glycans are attached at residues Asn124 and Asn197. Substrate is bound at residue Glu223. N-linked (GlcNAc...) asparagine glycosylation is found at Asn324 and Asn340. Residue 357–361 (GAMEN) participates in substrate binding. Residue His393 participates in Zn(2+) binding. Residue Glu394 is the Proton acceptor of the active site. Residues His397 and Glu416 each contribute to the Zn(2+) site. 9 N-linked (GlcNAc...) asparagine glycosylation sites follow: Asn554, Asn589, Asn597, Asn607, Asn678, Asn763, Asn773, Asn801, and Asn828. Arg887 contributes to the substrate binding site.

It belongs to the peptidase M1 family. As to quaternary structure, homodimer; disulfide-linked. Requires Zn(2+) as cofactor. In terms of tissue distribution, expressed in choriocarcinoma cancer cell lines (at protein level). Expressed by epithelial cells of the proximal tubule cells and the glomerulus of the nephron. Also found in a variety of other tissues.

Its subcellular location is the cell membrane. The catalysed reaction is Release of N-terminal glutamate (and to a lesser extent aspartate) from a peptide.. With respect to regulation, substrate specificity is modulated by calcium which enhances the enzymatic activity for cleavage of acidic residues while reducing its activity with basic residues. Inhibited by aminopeptidase inhibitors amastatin and bestatin. In terms of biological role, regulates central hypertension through its calcium-modulated preference to cleave N-terminal acidic residues from peptides such as angiotensin II. The protein is Glutamyl aminopeptidase (ENPEP) of Homo sapiens (Human).